The chain runs to 475 residues: Ataxin-10 (475 aa).

R10 carries the post-translational modification Omega-N-methylarginine. Phosphoserine is present on residues S12 and S77. T82 carries the phosphothreonine modification. S430 carries the post-translational modification Phosphoserine.

It belongs to the ataxin-10 family. In terms of assembly, homooligomer. Interacts with GNB2. Interacts with IQCB1. Interacts with OGT. In terms of processing, polyubiquitinated. Post-translationally, phosphorylation at Ser-12 by AURKB promotes the association of ATXN10 with PLK1. Phosphorylation at Ser-77 and Thr-82 by PLK1 may play a role in the regulation of cytokinesis and may stimulate the proteasome-mediated degradation of ATXN10. As to expression, ubiquitous distribution. Markedly increased expression in testis, adrenals, and brain.

It localises to the cytoplasm. It is found in the perinuclear region. The protein resides in the midbody. Its subcellular location is the cytoskeleton. The protein localises to the cilium basal body. It localises to the microtubule organizing center. It is found in the centrosome. The protein resides in the centriole. In terms of biological role, may play a role in the regulation of cytokinesis. May play a role in signaling by stimulating protein glycosylation. Induces neuritogenesis by activating the Ras-MAP kinase pathway and is necessary for the survival of cerebellar neurons. Does not appear to play a major role in ciliogenesis. The chain is Ataxin-10 (Atxn10) from Rattus norvegicus (Rat).